The sequence spans 390 residues: Chorismate synthase (390 aa).

2 residues coordinate NADP(+): Arg-39 and Arg-45. FMN contacts are provided by residues 132-134 (RSS), 253-254 (NA), Gly-298, 313-317 (KPIPT), and Arg-339.

This sequence belongs to the chorismate synthase family. Homotetramer. It depends on FMNH2 as a cofactor.

The catalysed reaction is 5-O-(1-carboxyvinyl)-3-phosphoshikimate = chorismate + phosphate. It functions in the pathway metabolic intermediate biosynthesis; chorismate biosynthesis; chorismate from D-erythrose 4-phosphate and phosphoenolpyruvate: step 7/7. Functionally, catalyzes the anti-1,4-elimination of the C-3 phosphate and the C-6 proR hydrogen from 5-enolpyruvylshikimate-3-phosphate (EPSP) to yield chorismate, which is the branch point compound that serves as the starting substrate for the three terminal pathways of aromatic amino acid biosynthesis. This reaction introduces a second double bond into the aromatic ring system. This is Chorismate synthase from Bacillus licheniformis (strain ATCC 14580 / DSM 13 / JCM 2505 / CCUG 7422 / NBRC 12200 / NCIMB 9375 / NCTC 10341 / NRRL NRS-1264 / Gibson 46).